Reading from the N-terminus, the 372-residue chain is Gibberellin 20 oxidase 1 (372 aa).

The region spanning 209–309 (RNDSIMRLNY…RRSLAFFLCP (101 aa)) is the Fe2OG dioxygenase domain. Positions 234, 236, and 290 each coordinate Fe cation. Arginine 300 is a catalytic residue.

Belongs to the iron/ascorbate-dependent oxidoreductase family. GA20OX subfamily. Fe(2+) is required as a cofactor. L-ascorbate serves as cofactor. Preferentially expressed in reproductive organs. Expressed in the epithelium of embryos and the tapetum of anthers. Expressed at low levels in the shoot apical meristem.

It carries out the reaction gibberellin A12 + 2 2-oxoglutarate + 3 O2 + H(+) = gibberellin A9 + 2 succinate + 3 CO2 + 2 H2O. The catalysed reaction is gibberellin A53 + 2 2-oxoglutarate + 3 O2 + H(+) = gibberellin A20 + 2 succinate + 3 CO2 + 2 H2O. Its function is as follows. Key oxidase enzyme in the biosynthesis of gibberellin. Catalyzes the conversion of GA12 and GA53 to GA9 and GA20 respectively, via a three-step oxidation at C-20 of the GA skeleton. In Oryza sativa subsp. japonica (Rice), this protein is Gibberellin 20 oxidase 1.